Reading from the N-terminus, the 896-residue chain is Alanine--tRNA ligase (896 aa).

Zn(2+) is bound by residues His-599, His-603, Cys-707, and His-711.

Belongs to the class-II aminoacyl-tRNA synthetase family. It depends on Zn(2+) as a cofactor.

It is found in the cytoplasm. It catalyses the reaction tRNA(Ala) + L-alanine + ATP = L-alanyl-tRNA(Ala) + AMP + diphosphate. In terms of biological role, catalyzes the attachment of alanine to tRNA(Ala) in a two-step reaction: alanine is first activated by ATP to form Ala-AMP and then transferred to the acceptor end of tRNA(Ala). Also edits incorrectly charged Ser-tRNA(Ala) and Gly-tRNA(Ala) via its editing domain. This Pyrobaculum calidifontis (strain DSM 21063 / JCM 11548 / VA1) protein is Alanine--tRNA ligase.